The chain runs to 114 residues: Large ribosomal subunit protein uL18 (114 aa).

This sequence belongs to the universal ribosomal protein uL18 family. As to quaternary structure, part of the 50S ribosomal subunit; part of the 5S rRNA/L5/L18/L25 subcomplex. Contacts the 5S and 23S rRNAs.

Its function is as follows. This is one of the proteins that bind and probably mediate the attachment of the 5S RNA into the large ribosomal subunit, where it forms part of the central protuberance. The polypeptide is Large ribosomal subunit protein uL18 (Bacteroides fragilis (strain ATCC 25285 / DSM 2151 / CCUG 4856 / JCM 11019 / LMG 10263 / NCTC 9343 / Onslow / VPI 2553 / EN-2)).